The primary structure comprises 317 residues: Transaldolase (317 aa).

Catalysis depends on lysine 132, which acts as the Schiff-base intermediate with substrate.

This sequence belongs to the transaldolase family. Type 1 subfamily. As to quaternary structure, homodimer.

Its subcellular location is the cytoplasm. The catalysed reaction is D-sedoheptulose 7-phosphate + D-glyceraldehyde 3-phosphate = D-erythrose 4-phosphate + beta-D-fructose 6-phosphate. The protein operates within carbohydrate degradation; pentose phosphate pathway; D-glyceraldehyde 3-phosphate and beta-D-fructose 6-phosphate from D-ribose 5-phosphate and D-xylulose 5-phosphate (non-oxidative stage): step 2/3. Transaldolase is important for the balance of metabolites in the pentose-phosphate pathway. This Histophilus somni (strain 2336) (Haemophilus somnus) protein is Transaldolase.